A 509-amino-acid chain; its full sequence is Histone deacetylase 2 (509 aa).

The interval 24–338 (RRVCYFYDPE…WCYETGVALG (315 aa)) is histone deacetylase. The Proton donor/acceptor role is filled by His158. Zn(2+) is bound by residues Asp193, His195, and Asp281. Residues 394-509 (PSVQFEERIP…NAKNEPGSSL (116 aa)) are disordered. 3 stretches are compositionally biased toward basic and acidic residues: residues 398-409 (FEERIPETKLPE), 418-434 (DERH…DHKP), and 448-472 (VKRE…HKVP). A compositionally biased stretch (polar residues) spans 481 to 494 (SSKQVPTADANSMA).

This sequence belongs to the histone deacetylase family. HD Type 1 subfamily. The cofactor is Zn(2+). Expressed in roots.

The protein resides in the nucleus. It carries out the reaction N(6)-acetyl-L-lysyl-[histone] + H2O = L-lysyl-[histone] + acetate. Responsible for the deacetylation of lysine residues on the N-terminal part of the core histones (H2A, H2B, H3 and H4). Histone deacetylation gives a tag for epigenetic repression and plays an important role in transcriptional regulation, cell cycle progression and developmental events. Histone deacetylases act via the formation of large multiprotein complexes. The polypeptide is Histone deacetylase 2 (Oryza sativa subsp. japonica (Rice)).